The following is a 328-amino-acid chain: Beta-ketoacyl-[acyl-carrier-protein] synthase III (328 aa).

Catalysis depends on residues cysteine 113 and histidine 252. The segment at 253-257 (QANLR) is ACP-binding. Asparagine 282 is a catalytic residue.

Belongs to the thiolase-like superfamily. FabH family. As to quaternary structure, homodimer.

The protein localises to the cytoplasm. It carries out the reaction malonyl-[ACP] + acetyl-CoA + H(+) = 3-oxobutanoyl-[ACP] + CO2 + CoA. It participates in lipid metabolism; fatty acid biosynthesis. Its function is as follows. Catalyzes the condensation reaction of fatty acid synthesis by the addition to an acyl acceptor of two carbons from malonyl-ACP. Catalyzes the first condensation reaction which initiates fatty acid synthesis and may therefore play a role in governing the total rate of fatty acid production. Possesses both acetoacetyl-ACP synthase and acetyl transacylase activities. Its substrate specificity determines the biosynthesis of branched-chain and/or straight-chain of fatty acids. The protein is Beta-ketoacyl-[acyl-carrier-protein] synthase III of Campylobacter fetus subsp. fetus (strain 82-40).